The primary structure comprises 150 residues: Ribosome maturation factor RimP (150 aa).

The protein belongs to the RimP family.

The protein localises to the cytoplasm. Required for maturation of 30S ribosomal subunits. This is Ribosome maturation factor RimP from Thermotoga neapolitana (strain ATCC 49049 / DSM 4359 / NBRC 107923 / NS-E).